A 348-amino-acid chain; its full sequence is N-acetyl-gamma-glutamyl-phosphate reductase (348 aa).

Cys149 is an active-site residue.

This sequence belongs to the NAGSA dehydrogenase family. Type 1 subfamily.

The protein localises to the cytoplasm. It carries out the reaction N-acetyl-L-glutamate 5-semialdehyde + phosphate + NADP(+) = N-acetyl-L-glutamyl 5-phosphate + NADPH + H(+). Its pathway is amino-acid biosynthesis; L-arginine biosynthesis; N(2)-acetyl-L-ornithine from L-glutamate: step 3/4. In terms of biological role, catalyzes the NADPH-dependent reduction of N-acetyl-5-glutamyl phosphate to yield N-acetyl-L-glutamate 5-semialdehyde. The polypeptide is N-acetyl-gamma-glutamyl-phosphate reductase (Cellvibrio japonicus (strain Ueda107) (Pseudomonas fluorescens subsp. cellulosa)).